The chain runs to 138 residues: Putative pre-16S rRNA nuclease (138 aa).

Belongs to the YqgF nuclease family.

The protein localises to the cytoplasm. In terms of biological role, could be a nuclease involved in processing of the 5'-end of pre-16S rRNA. The polypeptide is Putative pre-16S rRNA nuclease (Listeria innocua serovar 6a (strain ATCC BAA-680 / CLIP 11262)).